Reading from the N-terminus, the 402-residue chain is Tryptophan synthase beta chain (402 aa).

Residue lysine 91 is modified to N6-(pyridoxal phosphate)lysine.

The protein belongs to the TrpB family. In terms of assembly, tetramer of two alpha and two beta chains. The cofactor is pyridoxal 5'-phosphate.

It carries out the reaction (1S,2R)-1-C-(indol-3-yl)glycerol 3-phosphate + L-serine = D-glyceraldehyde 3-phosphate + L-tryptophan + H2O. Its pathway is amino-acid biosynthesis; L-tryptophan biosynthesis; L-tryptophan from chorismate: step 5/5. The beta subunit is responsible for the synthesis of L-tryptophan from indole and L-serine. The protein is Tryptophan synthase beta chain (trpB) of Lactococcus lactis subsp. lactis (strain IL1403) (Streptococcus lactis).